The following is an 86-amino-acid chain: Small ribosomal subunit protein uS15 (86 aa).

The tract at residues 1–22 is disordered; that stretch reads MSVDTQKVIEDNKRSAQDTGSP. Basic and acidic residues predominate over residues 7–16; that stretch reads KVIEDNKRSA.

It belongs to the universal ribosomal protein uS15 family. As to quaternary structure, part of the 30S ribosomal subunit. Forms a bridge to the 50S subunit in the 70S ribosome, contacting the 23S rRNA.

In terms of biological role, one of the primary rRNA binding proteins, it binds directly to 16S rRNA where it helps nucleate assembly of the platform of the 30S subunit by binding and bridging several RNA helices of the 16S rRNA. Its function is as follows. Forms an intersubunit bridge (bridge B4) with the 23S rRNA of the 50S subunit in the ribosome. The sequence is that of Small ribosomal subunit protein uS15 from Xanthomonas axonopodis pv. citri (strain 306).